A 366-amino-acid chain; its full sequence is GTP cyclohydrolase 1 type 2 homolog (366 aa).

Positions 64, 65, 102, 326, and 329 each coordinate a divalent metal cation.

The protein belongs to the GTP cyclohydrolase I type 2/NIF3 family. As to quaternary structure, homohexamer.

This is GTP cyclohydrolase 1 type 2 homolog from Staphylococcus epidermidis (strain ATCC 35984 / DSM 28319 / BCRC 17069 / CCUG 31568 / BM 3577 / RP62A).